The primary structure comprises 421 residues: F-box only protein 5 (421 aa).

S85 is modified (phosphoserine). Residues 114-219 form an interaction with EVI5 region; the sequence is ELEASRLYED…IGKKMGLEHL (106 aa). Residues 223–273 form the F-box domain; that stretch reads AELSRRGFVHLLANILTKLSGMDLVNLSKVSRIWKKILENNKGAFQLYSKT. The segment at 236 to 313 is sufficient for interaction with RPS6KA2; Prevents association of CDC20 with RPS6KA2; that stretch reads NILTKLSGMD…KSSTWAPPKK (78 aa). Residues 236–383 are requires for efficient binding to CDC20; sequence NILTKLSGMD…SCQFEYCTKC (148 aa). Residues 280–421 are inhibits APC ubiquitin ligase activity; the sequence is SSKLSLHATT…KKSKKNLQRL (142 aa). The segment at 296–299 is competitively blocks access of APC substrates to the D-box coreceptor formed by FZR1 and ANAPC10; the sequence is RAAL. Residues 348–396 form a ZBR-type zinc finger; sequence SLKACVRCNFPAKYDHYLERAVCKRESCQFEYCTKCLCAYHNNKDCLNG. Residues C352, C355, C370, C375, C380, C383, H388, and C393 each contribute to the Zn(2+) site. Residues 352–394 are allows a rapid multiple mono-ubiquitination of the APC substrate, but strongly inhibits the slow ubiquitin chain elongation catalyzed by UBCH10; it reads CVRCNFPAKYDHYLERAVCKRESCQFEYCTKCLCAYHNNKDCL. Residues 411–421 form a sufficient to suppress UBE2S activity; essential for interaction with UBE2S; competitively inhibits the rapide ubiquitin chain elongation by UBE2D1 which blocks UBE2D1 with APC; indispensable for recruitment and position of FBXO5 to the catalytic site of APC; abrogates the inhibition of ubiquitin chain assembly primarily catalyzed by UBE2S; inhibits the ubiquitination by either UBE2C or UBE2D1 region; it reads TKKSKKNLQRL.

As to quaternary structure, part of a SCF (SKP1-cullin-F-box) protein ligase complex. Interacts with BTRC; mediates proteolysis by the SCF ubiquitin ligase complex leading to activation of APC in late mitosis and subsequent mitotic progression. Interacts with FZR1/CDH1 and the N-terminal substrate-binding domain of CDC20; prevents APC activation. Also interacts with EVI5 which blocks its phosphorylation by PLK1 and prevents its subsequent binding to BTRC and degradation. Interacts simultaneously with anaphase promoting complex (APC), through at least ANAPC2, CDC23, CDC27, the APC substrate GMNN and the APC activator FZR1. Interacts with UBE2S; interferes with the activity of UBE2S mainly by disrupting the dynamic electrostatic association between the C-terminal tail of UBE2S and ANAPC2. Interacts with RPS6KA2; cooperates to induce the metaphase arrest of early blastomeres; increases and stabilizes interaction of FBXO5 with CDC20. In terms of processing, phosphorylation by CDK2 and subsequently by PLK1 triggers degradation during early mitosis through ubiquitin-mediated proteolysis by the SCF ubiquitin ligase complex containing the F-box protein BTRC. This degradation is necessary for the activation of APC in late mitosis and subsequent mitotic progression. Phosphorylated by RPS6KA2; increases and stabilizes interaction with CDC20. Post-translationally, ubiquitinated by the SCF(BTRC) complex following phosphorylation by PLK1. Undergoes both 'Lys-11' and 'Lys-48'-linked polyubiquitination by APC-FZR1 complex leading to degradation during G1 phase by the proteasome. Degraded through the SCF(BTRC) complex; degradation occurs during oocyte maturation, between germinal vesicle breakdown (GVBD) and meiosis I, and is required for the meiosis I-meiosis II transition. As to expression, expressed in oocytes and granulosa cells. Expressed in proliferating cells compartments in hair follicle and skin epidermis, spermatogonia, and intestinal crypts.

It is found in the nucleus. The protein resides in the cytoplasm. The protein localises to the cytoskeleton. It localises to the spindle. It participates in protein modification; protein ubiquitination. Functionally, regulator of APC activity during mitotic and meiotic cell cycle. During mitotic cell cycle plays a role as both substrate and inhibitor of APC-FZR1 complex. During G1 phase, plays a role as substrate of APC-FZR1 complex E3 ligase. Then switches as an inhibitor of APC-FZR1 complex during S and G2 leading to cell-cycle commitment. As APC inhibitor, prevents the degradation of APC substrates at multiple levels: by interacting with APC and blocking access of APC substrates to the D-box co-receptor, formed by FZR1 and ANAPC10; by suppressing ubiquitin ligation and chain elongation by APC by preventing the UBE2C and UBE2S activities. Plays a role in genome integrity preservation by coordinating DNA replication with mitosis through APC inhibition in interphase to stabilize CCNA2 and GMNN in order to promote mitosis and prevent rereplication and DNA damage-induced cellular senescence. During oocyte maturation, plays a role in meiosis through inactivation of APC-FZR1 complex. Inhibits APC through RPS6KA2 interaction that increases FBXO5 affiniy for CDC20 leading to the metaphase arrest of the second meiotic division before fertilization. Controls entry into the first meiotic division through inactivation of APC-FZR1 complex. Promotes migration and osteogenic differentiation of mesenchymal stem cells. The protein is F-box only protein 5 of Mus musculus (Mouse).